A 1856-amino-acid polypeptide reads, in one-letter code: Zinc metalloprotease ZmpC (1856 aa).

A signal peptide spans M1–A42. Positions D43–T95 are excised as a propeptide. The LPXTG sorting signal motif lies at L92–G96. T95 carries the post-translational modification Pentaglycyl murein peptidoglycan amidated threonine. The next 2 membrane-spanning stretches (helical) occupy residues F97 to V117 and F130 to I152. At L153–K1856 the chain is on the extracellular side. Polar residues-rich tracts occupy residues N254 to Q267 and N286 to S295. The tract at residues N254–P362 is disordered. Composition is skewed to basic and acidic residues over residues P322–L334 and H351–E361. The G5 domain occupies A417–V496. Residue H1502 participates in Zn(2+) binding. E1503 is an active-site residue. Zn(2+) contacts are provided by H1506 and E1526.

It belongs to the peptidase M26 family. Zn(2+) serves as cofactor. In terms of processing, the Gram-positive cell-wall anchor motif LPXTG is located in the N-terminal part, in contrast to such motifs in other known streptococcal and staphylococcal proteins. The protease could be cleaved by the sortase and anchored in the membrane via the two potential N-terminal transmembrane domains, whereas the propeptide located prior to the LPXTG motif would remain attached to the cell wall peptidoglycan by an amide bond.

The protein localises to the secreted. It localises to the cell wall. It is found in the membrane. In terms of biological role, zinc metalloproteinase that specifically cleaves human matrix metalloproteinase 9 (MMP-9), leading to its activation. May play a role in pneumococcal virulence and pathogenicity in the lung. This Streptococcus pneumoniae serotype 4 (strain ATCC BAA-334 / TIGR4) protein is Zinc metalloprotease ZmpC (zmpC).